The sequence spans 278 residues: Urease accessory protein UreD (278 aa).

Belongs to the UreD family. UreD, UreF and UreG form a complex that acts as a GTP-hydrolysis-dependent molecular chaperone, activating the urease apoprotein by helping to assemble the nickel containing metallocenter of UreC. The UreE protein probably delivers the nickel.

The protein resides in the cytoplasm. Functionally, required for maturation of urease via the functional incorporation of the urease nickel metallocenter. The sequence is that of Urease accessory protein UreD from Staphylococcus aureus (strain JH1).